Here is a 338-residue protein sequence, read N- to C-terminus: Glutamyl-tRNA reductase (338 aa).

Substrate-binding positions include threonine 50–arginine 53, serine 102, glutamate 107–glutamate 109, and glutamine 113. The active-site Nucleophile is the cysteine 51. Glycine 181–asparagine 186 is a binding site for NADP(+).

This sequence belongs to the glutamyl-tRNA reductase family. Homodimer.

The catalysed reaction is (S)-4-amino-5-oxopentanoate + tRNA(Glu) + NADP(+) = L-glutamyl-tRNA(Glu) + NADPH + H(+). The protein operates within porphyrin-containing compound metabolism; protoporphyrin-IX biosynthesis; 5-aminolevulinate from L-glutamyl-tRNA(Glu): step 1/2. Catalyzes the NADPH-dependent reduction of glutamyl-tRNA(Glu) to glutamate 1-semialdehyde (GSA). The sequence is that of Glutamyl-tRNA reductase from Chlamydia caviae (strain ATCC VR-813 / DSM 19441 / 03DC25 / GPIC) (Chlamydophila caviae).